The following is a 215-amino-acid chain: Ion-translocating oxidoreductase complex subunit G (215 aa).

Residues 9 to 29 traverse the membrane as a helical segment; it reads GLILSLFAIITSGLIALTYFG. Position 176 is an FMN phosphoryl threonine (T176).

Belongs to the RnfG family. As to quaternary structure, the complex is composed of six subunits: RnfA, RnfB, RnfC, RnfD, RnfE and RnfG. FMN serves as cofactor.

It is found in the cell inner membrane. Part of a membrane-bound complex that couples electron transfer with translocation of ions across the membrane. In Pseudoalteromonas atlantica (strain T6c / ATCC BAA-1087), this protein is Ion-translocating oxidoreductase complex subunit G.